We begin with the raw amino-acid sequence, 317 residues long: Malate dehydrogenase (317 aa).

Residues 10–15 (GGGQIG) and Asp-34 contribute to the NAD(+) site. Substrate is bound by residues Arg-83 and Arg-89. Residues Asn-96 and 119 to 121 (ISN) contribute to the NAD(+) site. Positions 121 and 152 each coordinate substrate. His-176 acts as the Proton acceptor in catalysis.

This sequence belongs to the LDH/MDH superfamily. MDH type 3 family.

The catalysed reaction is (S)-malate + NAD(+) = oxaloacetate + NADH + H(+). Its function is as follows. Catalyzes the reversible oxidation of malate to oxaloacetate. This Geobacter metallireducens (strain ATCC 53774 / DSM 7210 / GS-15) protein is Malate dehydrogenase.